The sequence spans 105 residues: UPF0145 protein lpp0255 (105 aa).

The protein belongs to the UPF0145 family.

In Legionella pneumophila (strain Paris), this protein is UPF0145 protein lpp0255.